The following is a 500-amino-acid chain: Matrilin-1 (500 aa).

The signal sequence occupies residues 1–29 (MKVTSGPAFALCSLLLLLLLLLQVPDSLS). Positions 30-226 (LVPQPRGHLC…AKKFQEAFCV (197 aa)) constitute a VWFA 1 domain. Asn-80 carries an N-linked (GlcNAc...) asparagine glycan. The region spanning 227–267 (VSDLCATGDHDCEQLCVSSPGSYTCACHEGFTLNSDGKTCN) is the EGF-like domain. Disulfide bonds link Cys-231-Cys-242, Cys-238-Cys-251, and Cys-253-Cys-266. Residues 268-457 (VCRGGGSGSA…GKKLQKQICV (190 aa)) enclose the VWFA 2 domain. Asn-348 is a glycosylation site (N-linked (GlcNAc...) asparagine). Residues 471 to 499 (EAKVEGLLQALTRKLEAVSGRLAVLENRI) adopt a coiled-coil conformation.

In terms of assembly, homotrimer. Part of a complex composed of MATN1 (via VWFA1 domain), type 2 collagens and type 6 collagens. Forms a complex (via covalent bonds) with ACAN; the interaction increases in abundance with increasing age of the organism via an increase in occupancy of MATN1 binding sites. Interacts with COMP. Post-translationally, N-glycosylated; reduces binding affinity for type 2 collagens. Expressed in femoral head articular cartilage. Expressed in the trachea and extraskeletal tissue around the eye.

Its subcellular location is the secreted. The protein resides in the extracellular space. It is found in the extracellular matrix. A major component of the extracellular matrix of non-articular cartilage. Binds to type 2 collagens and forms long concatenated protein networks as part of the extracellular matrix. Required for the network-like organization and bundling of collagen fibrils surrounding chondrocytes in the zones of maturation and hypertrophy. Required for mechanotransduction and adaption to mechanical loading in cartilage chondrocytes, resulting in an increase in expression of the extracellular matrix components ACAN and COL2A1. Acts as a moderator of angiogenesis in response to injury. The protein is Matrilin-1 of Mus musculus (Mouse).